Reading from the N-terminus, the 291-residue chain is Phosphate import ATP-binding protein PstB (291 aa).

An ABC transporter domain is found at 44 to 286 (VKAREVNVFY…PEEKRTQDYI (243 aa)). An ATP-binding site is contributed by 76–83 (GPSGCGKS).

It belongs to the ABC transporter superfamily. Phosphate importer (TC 3.A.1.7) family. The complex is composed of two ATP-binding proteins (PstB), two transmembrane proteins (PstC and PstA) and a solute-binding protein (PstS).

The protein resides in the cell inner membrane. It carries out the reaction phosphate(out) + ATP + H2O = ADP + 2 phosphate(in) + H(+). In terms of biological role, part of the ABC transporter complex PstSACB involved in phosphate import. Responsible for energy coupling to the transport system. The sequence is that of Phosphate import ATP-binding protein PstB from Chelativorans sp. (strain BNC1).